The primary structure comprises 214 residues: Pyrrolidone-carboxylate peptidase (214 aa).

Active-site residues include E80, C143, and H166.

Belongs to the peptidase C15 family. As to quaternary structure, homotetramer.

Its subcellular location is the cytoplasm. It carries out the reaction Release of an N-terminal pyroglutamyl group from a polypeptide, the second amino acid generally not being Pro.. Its function is as follows. Removes 5-oxoproline from various penultimate amino acid residues except L-proline. This chain is Pyrrolidone-carboxylate peptidase, found in Enterobacter sp. (strain 638).